The primary structure comprises 302 residues: Epoxyqueuosine reductase (302 aa).

Residue aspartate 128 is the Proton donor of the active site. One can recognise a 4Fe-4S ferredoxin-type 1 domain in the interval 170–202 (LPLQADGPIRDYCGTCTACIDACPTDAITPYEV). Residues cysteine 182, cysteine 185, cysteine 188, cysteine 192, cysteine 207, cysteine 234, cysteine 237, and cysteine 241 each coordinate [4Fe-4S] cluster. In terms of domain architecture, 4Fe-4S ferredoxin-type 2 spans 221 to 251 (NEFKGKMENWIFGCDICQDVCPWNSFARPHS).

It belongs to the QueG family. Monomer. It depends on cob(II)alamin as a cofactor. The cofactor is [4Fe-4S] cluster.

The protein resides in the cytoplasm. The catalysed reaction is epoxyqueuosine(34) in tRNA + AH2 = queuosine(34) in tRNA + A + H2O. It functions in the pathway tRNA modification; tRNA-queuosine biosynthesis. Its function is as follows. Catalyzes the conversion of epoxyqueuosine (oQ) to queuosine (Q), which is a hypermodified base found in the wobble positions of tRNA(Asp), tRNA(Asn), tRNA(His) and tRNA(Tyr). This is Epoxyqueuosine reductase from Leadbetterella byssophila (strain DSM 17132 / JCM 16389 / KACC 11308 / NBRC 106382 / 4M15).